Here is a 246-residue protein sequence, read N- to C-terminus: tRNA (guanine-N(1)-)-methyltransferase (246 aa).

S-adenosyl-L-methionine-binding positions include G113 and L132–L137.

The protein belongs to the RNA methyltransferase TrmD family. In terms of assembly, homodimer.

The protein localises to the cytoplasm. It catalyses the reaction guanosine(37) in tRNA + S-adenosyl-L-methionine = N(1)-methylguanosine(37) in tRNA + S-adenosyl-L-homocysteine + H(+). Specifically methylates guanosine-37 in various tRNAs. This is tRNA (guanine-N(1)-)-methyltransferase from Lactiplantibacillus plantarum (strain ATCC BAA-793 / NCIMB 8826 / WCFS1) (Lactobacillus plantarum).